A 504-amino-acid polypeptide reads, in one-letter code: Lysine--tRNA ligase (504 aa).

Residues Glu-404 and Glu-411 each contribute to the Mg(2+) site.

It belongs to the class-II aminoacyl-tRNA synthetase family. In terms of assembly, homodimer. Mg(2+) is required as a cofactor.

It is found in the cytoplasm. It catalyses the reaction tRNA(Lys) + L-lysine + ATP = L-lysyl-tRNA(Lys) + AMP + diphosphate. The protein is Lysine--tRNA ligase of Aliarcobacter butzleri (strain RM4018) (Arcobacter butzleri).